A 417-amino-acid polypeptide reads, in one-letter code: Serine hydroxymethyltransferase (417 aa).

(6S)-5,6,7,8-tetrahydrofolate is bound by residues Leu-121 and 125–127 (GHL). Residue Lys-229 is modified to N6-(pyridoxal phosphate)lysine. 355-357 (SPF) lines the (6S)-5,6,7,8-tetrahydrofolate pocket.

This sequence belongs to the SHMT family. As to quaternary structure, homodimer. It depends on pyridoxal 5'-phosphate as a cofactor.

The protein resides in the cytoplasm. It catalyses the reaction (6R)-5,10-methylene-5,6,7,8-tetrahydrofolate + glycine + H2O = (6S)-5,6,7,8-tetrahydrofolate + L-serine. It functions in the pathway one-carbon metabolism; tetrahydrofolate interconversion. It participates in amino-acid biosynthesis; glycine biosynthesis; glycine from L-serine: step 1/1. Functionally, catalyzes the reversible interconversion of serine and glycine with tetrahydrofolate (THF) serving as the one-carbon carrier. This reaction serves as the major source of one-carbon groups required for the biosynthesis of purines, thymidylate, methionine, and other important biomolecules. Also exhibits THF-independent aldolase activity toward beta-hydroxyamino acids, producing glycine and aldehydes, via a retro-aldol mechanism. The sequence is that of Serine hydroxymethyltransferase from Klebsiella pneumoniae (strain 342).